The primary structure comprises 318 residues: Formimidoylglutamase (318 aa).

Residues H130, D155, H157, D159, D246, and D248 each coordinate Mn(2+).

It belongs to the arginase family. Mn(2+) is required as a cofactor.

The catalysed reaction is N-formimidoyl-L-glutamate + H2O = formamide + L-glutamate. It functions in the pathway amino-acid degradation; L-histidine degradation into L-glutamate; L-glutamate from N-formimidoyl-L-glutamate (hydrolase route): step 1/1. Catalyzes the conversion of N-formimidoyl-L-glutamate to L-glutamate and formamide. The protein is Formimidoylglutamase of Klebsiella pneumoniae subsp. pneumoniae (strain ATCC 700721 / MGH 78578).